The following is a 268-amino-acid chain: Tryptophan synthase alpha chain (268 aa).

Catalysis depends on proton acceptor residues Glu-49 and Asp-60.

This sequence belongs to the TrpA family. As to quaternary structure, tetramer of two alpha and two beta chains.

It catalyses the reaction (1S,2R)-1-C-(indol-3-yl)glycerol 3-phosphate + L-serine = D-glyceraldehyde 3-phosphate + L-tryptophan + H2O. It participates in amino-acid biosynthesis; L-tryptophan biosynthesis; L-tryptophan from chorismate: step 5/5. The alpha subunit is responsible for the aldol cleavage of indoleglycerol phosphate to indole and glyceraldehyde 3-phosphate. This Salmonella typhimurium (strain LT2 / SGSC1412 / ATCC 700720) protein is Tryptophan synthase alpha chain.